The following is a 339-amino-acid chain: Phenylalanine--tRNA ligase alpha subunit (339 aa).

A Mg(2+)-binding site is contributed by glutamate 253.

Belongs to the class-II aminoacyl-tRNA synthetase family. Phe-tRNA synthetase alpha subunit type 1 subfamily. Tetramer of two alpha and two beta subunits. Mg(2+) is required as a cofactor.

The protein localises to the cytoplasm. It catalyses the reaction tRNA(Phe) + L-phenylalanine + ATP = L-phenylalanyl-tRNA(Phe) + AMP + diphosphate + H(+). The protein is Phenylalanine--tRNA ligase alpha subunit of Geobacter sulfurreducens (strain ATCC 51573 / DSM 12127 / PCA).